A 382-amino-acid chain; its full sequence is Galactokinase (382 aa).

34–37 is a substrate binding site; it reads EHTD. 124 to 130 contributes to the ATP binding site; that stretch reads GAGLSSS. Mg(2+)-binding residues include serine 130 and glutamate 162. Aspartate 174 (proton acceptor) is an active-site residue. Tyrosine 223 contributes to the substrate binding site.

It belongs to the GHMP kinase family. GalK subfamily.

The protein resides in the cytoplasm. It carries out the reaction alpha-D-galactose + ATP = alpha-D-galactose 1-phosphate + ADP + H(+). It participates in carbohydrate metabolism; galactose metabolism. Functionally, catalyzes the transfer of the gamma-phosphate of ATP to D-galactose to form alpha-D-galactose-1-phosphate (Gal-1-P). The protein is Galactokinase of Escherichia coli O17:K52:H18 (strain UMN026 / ExPEC).